Consider the following 220-residue polypeptide: tRNA (guanine-N(7)-)-methyltransferase (220 aa).

S-adenosyl-L-methionine contacts are provided by Glu42, Glu67, and Asp122. Asp122 is an active-site residue. Substrate is bound by residues Lys126, Asp158, and 198–201 (TEYE).

It belongs to the class I-like SAM-binding methyltransferase superfamily. TrmB family.

The enzyme catalyses guanosine(46) in tRNA + S-adenosyl-L-methionine = N(7)-methylguanosine(46) in tRNA + S-adenosyl-L-homocysteine. It participates in tRNA modification; N(7)-methylguanine-tRNA biosynthesis. Catalyzes the formation of N(7)-methylguanine at position 46 (m7G46) in tRNA. The chain is tRNA (guanine-N(7)-)-methyltransferase from Mycoplasma capricolum subsp. capricolum (strain California kid / ATCC 27343 / NCTC 10154).